A 444-amino-acid polypeptide reads, in one-letter code: Exodeoxyribonuclease 7 large subunit (444 aa).

Belongs to the XseA family. As to quaternary structure, heterooligomer composed of large and small subunits.

Its subcellular location is the cytoplasm. The catalysed reaction is Exonucleolytic cleavage in either 5'- to 3'- or 3'- to 5'-direction to yield nucleoside 5'-phosphates.. Its function is as follows. Bidirectionally degrades single-stranded DNA into large acid-insoluble oligonucleotides, which are then degraded further into small acid-soluble oligonucleotides. This Xylella fastidiosa (strain M23) protein is Exodeoxyribonuclease 7 large subunit.